The primary structure comprises 408 residues: LL-diaminopimelate aminotransferase (408 aa).

2 residues coordinate substrate: tyrosine 15 and glycine 42. Residues tyrosine 72, 108 to 109 (SK), tyrosine 132, asparagine 187, tyrosine 218, and 246 to 248 (SFS) contribute to the pyridoxal 5'-phosphate site. Substrate contacts are provided by lysine 109, tyrosine 132, and asparagine 187. Lysine 249 is subject to N6-(pyridoxal phosphate)lysine. Positions 257 and 292 each coordinate pyridoxal 5'-phosphate. Substrate-binding residues include asparagine 292 and arginine 388.

The protein belongs to the class-I pyridoxal-phosphate-dependent aminotransferase family. LL-diaminopimelate aminotransferase subfamily. As to quaternary structure, homodimer. Requires pyridoxal 5'-phosphate as cofactor.

It carries out the reaction (2S,6S)-2,6-diaminopimelate + 2-oxoglutarate = (S)-2,3,4,5-tetrahydrodipicolinate + L-glutamate + H2O + H(+). It participates in amino-acid biosynthesis; L-lysine biosynthesis via DAP pathway; LL-2,6-diaminopimelate from (S)-tetrahydrodipicolinate (aminotransferase route): step 1/1. Functionally, involved in the synthesis of meso-diaminopimelate (m-DAP or DL-DAP), required for both lysine and peptidoglycan biosynthesis. Catalyzes the direct conversion of tetrahydrodipicolinate to LL-diaminopimelate. This chain is LL-diaminopimelate aminotransferase, found in Leptospira borgpetersenii serovar Hardjo-bovis (strain L550).